Consider the following 103-residue polypeptide: Phospholipase A2 large subunit (103 aa).

Positions 7, 9, and 11 each coordinate Ca(2+). 4 cysteine pairs are disulfide-bonded: C8–C30, C29–C68, C36–C61, and C59–C96. N16 carries an N-linked (GlcNAc...) asparagine glycan. H33 is an active-site residue. Position 34 (D34) interacts with Ca(2+).

It belongs to the phospholipase A2 family. Group III subfamily. As to quaternary structure, heterodimer composed of a large subunit and a small subunit; disulfide-linked. It depends on Ca(2+) as a cofactor. Expressed by the venom gland.

Its subcellular location is the secreted. It carries out the reaction a 1,2-diacyl-sn-glycero-3-phosphocholine + H2O = a 1-acyl-sn-glycero-3-phosphocholine + a fatty acid + H(+). In terms of biological role, phospholipase toxin, which catalyzes the calcium-dependent hydrolysis of the 2-acyl groups in 3-sn-phosphoglycerides. Inhibits both skeletal (RYR1) and cardiac (RYR2) ryanodine receptors (calcium release channels). Probably blocks ryanodine receptors by generating a lipid product. In Chersonesometrus fulvipes (Indian black scorpion), this protein is Phospholipase A2 large subunit.